The primary structure comprises 117 residues: Large ribosomal subunit protein uL24 (117 aa).

It belongs to the universal ribosomal protein uL24 family. In terms of assembly, part of the 50S ribosomal subunit.

One of two assembly initiator proteins, it binds directly to the 5'-end of the 23S rRNA, where it nucleates assembly of the 50S subunit. Functionally, one of the proteins that surrounds the polypeptide exit tunnel on the outside of the subunit. The sequence is that of Large ribosomal subunit protein uL24 from Thermosynechococcus vestitus (strain NIES-2133 / IAM M-273 / BP-1).